Reading from the N-terminus, the 247-residue chain is ATP synthase subunit a, chloroplastic (247 aa).

The next 5 membrane-spanning stretches (helical) occupy residues 38–58 (QVLI…FIAV), 95–115 (VPFI…GALL), 134–154 (INTT…AGLS), 199–219 (LVVV…VMFL), and 220–240 (GLFT…AYIG).

Belongs to the ATPase A chain family. In terms of assembly, F-type ATPases have 2 components, CF(1) - the catalytic core - and CF(0) - the membrane proton channel. CF(1) has five subunits: alpha(3), beta(3), gamma(1), delta(1), epsilon(1). CF(0) has four main subunits: a, b, b' and c.

It is found in the plastid. It localises to the chloroplast thylakoid membrane. Its function is as follows. Key component of the proton channel; it plays a direct role in the translocation of protons across the membrane. The polypeptide is ATP synthase subunit a, chloroplastic (Citrus sinensis (Sweet orange)).